Here is a 211-residue protein sequence, read N- to C-terminus: Mediator-associated protein 2 (211 aa).

A disordered region spans residues 128–211 (QQKLVGSVTN…KSKKKVKKEE (84 aa)). Residues 134-148 (SVTNSSKKSSNLTQS) show a composition bias toward low complexity. Phosphoserine is present on S173. The segment covering 189 to 198 (STSTVSGSSE) has biased composition (low complexity). The span at 202-211 (KSKKKVKKEE) shows a compositional bias: basic residues.

In terms of assembly, associated with the Mediator complex.

The protein localises to the nucleus. This is Mediator-associated protein 2 from Arabidopsis thaliana (Mouse-ear cress).